The primary structure comprises 1161 residues: Lateral signaling target protein 2 homolog (1161 aa).

Disordered stretches follow at residues 417-510 (ATGS…EVDD), 583-831 (AAGS…PTQS), 890-918 (MNSS…HNHP), 935-978 (DQQN…SVES), 992-1014 (SSPV…TGQE), and 1029-1095 (GKAS…EPPR). Gly residues predominate over residues 419 to 429 (GSSGFGSGRGG). Residues 438-453 (PKQRHNQAHLRQRGAP) show a composition bias toward basic residues. Residues 468–487 (GDDREPVVEEDNNNHLRKEI) show a composition bias toward basic and acidic residues. Over residues 488 to 510 (EEEDVDDDMEEEEEDEEEDEVDD) the composition is skewed to acidic residues. A compositionally biased stretch (low complexity) spans 583 to 601 (AAGSGGQQQQQQQQQLIDS). Positions 669–704 (SDYEEADVDDEPDDVDADDDDEEEDDVVGEVEEQND) are enriched in acidic residues. Residues 728-742 (KAARNHRKSSHHRPR) show a composition bias toward basic residues. Residues 743 to 757 (PSTSSSSSSAAYRNK) are compositionally biased toward low complexity. The span at 758-773 (SQSHQHHHHHHHHHHH) shows a compositional bias: basic residues. 2 stretches are compositionally biased toward low complexity: residues 781 to 800 (GTSS…SNGS) and 807 to 831 (MQQQ…PTQS). Residues 896–910 (EPDEPPEPSGSEEES) are compositionally biased toward acidic residues. 2 stretches are compositionally biased toward polar residues: residues 935 to 948 (DQQN…QSIY) and 956 to 967 (EQDSVFGSSGDS). Residues 996 to 1010 (GAGGAGGGGMVGGSR) are compositionally biased toward gly residues. Residues 1054-1065 (SRSSPSSPVNSN) show a composition bias toward low complexity. Over residues 1081–1094 (TAHEQQRRMPEEPP) the composition is skewed to basic and acidic residues. An FYVE-type zinc finger spans residues 1099-1159 (DCDAPRCMAC…VCRDCYIHEV (61 aa)). Positions 1105, 1108, 1121, 1124, 1129, 1132, 1151, and 1154 each coordinate Zn(2+).

It belongs to the lst-2 family.

Functionally, negative regulator of epidermal growth factor receptor (EGFR) signaling. In Anopheles gambiae (African malaria mosquito), this protein is Lateral signaling target protein 2 homolog.